The sequence spans 516 residues: RxLR effector protein PITG_15127 (516 aa).

The signal sequence occupies residues 1–22 (MRLYSGAILCTIATLLISVSTA). Residues 48–63 (RFLRVSTQNTENGENR) carry the RxLR-dEER motif.

Belongs to the RxLR effector family.

Its subcellular location is the secreted. The protein resides in the host cell membrane. It localises to the host nucleus. It is found in the host cytoplasm. Its function is as follows. Effector that enhances P.infestans colonization of Nicotiana benthamiana leaves. The polypeptide is RxLR effector protein PITG_15127 (Phytophthora infestans (strain T30-4) (Potato late blight agent)).